We begin with the raw amino-acid sequence, 540 residues long: Chaperonin GroEL (540 aa).

ATP-binding positions include 29–32 (TLGP), 86–90 (DGTTT), G413, and D493. Residues 520-540 (AEKPEPKPAPGPADPGAGMDF) form a disordered region.

The protein belongs to the chaperonin (HSP60) family. As to quaternary structure, forms a cylinder of 14 subunits composed of two heptameric rings stacked back-to-back. Interacts with the co-chaperonin GroES.

It localises to the cytoplasm. The catalysed reaction is ATP + H2O + a folded polypeptide = ADP + phosphate + an unfolded polypeptide.. Together with its co-chaperonin GroES, plays an essential role in assisting protein folding. The GroEL-GroES system forms a nano-cage that allows encapsulation of the non-native substrate proteins and provides a physical environment optimized to promote and accelerate protein folding. This Tropheryma whipplei (Whipple's bacillus) protein is Chaperonin GroEL.